We begin with the raw amino-acid sequence, 464 residues long: Protein FAM90A18 (464 aa).

Disordered regions lie at residues 1–42 (MMAR…DPRL), 70–387 (PATL…ASHD), and 415–437 (HSPE…SEAP). Composition is skewed to basic and acidic residues over residues 74–89 (GKKE…KPRV) and 97–114 (NKDK…DPQR). A compositionally biased stretch (low complexity) spans 180-197 (LASLSPLRKASLSSSSSL).

It belongs to the FAM90 family.

In Homo sapiens (Human), this protein is Protein FAM90A18.